A 139-amino-acid chain; its full sequence is Phosphoribosyl-AMP cyclohydrolase (139 aa).

A Mg(2+)-binding site is contributed by Asp95. Zn(2+) is bound at residue Cys96. Mg(2+)-binding residues include Asp97 and Asp99. The Zn(2+) site is built by Cys114 and Cys121.

Belongs to the PRA-CH family. In terms of assembly, homodimer. It depends on Mg(2+) as a cofactor. Zn(2+) serves as cofactor.

The protein localises to the cytoplasm. The enzyme catalyses 1-(5-phospho-beta-D-ribosyl)-5'-AMP + H2O = 1-(5-phospho-beta-D-ribosyl)-5-[(5-phospho-beta-D-ribosylamino)methylideneamino]imidazole-4-carboxamide. It participates in amino-acid biosynthesis; L-histidine biosynthesis; L-histidine from 5-phospho-alpha-D-ribose 1-diphosphate: step 3/9. Functionally, catalyzes the hydrolysis of the adenine ring of phosphoribosyl-AMP. The sequence is that of Phosphoribosyl-AMP cyclohydrolase from Chelativorans sp. (strain BNC1).